The primary structure comprises 288 residues: Cyclin-dependent kinase 2 homolog (288 aa).

The region spanning 4–284 (YHGLEKIGEG…AKQALEHAYF (281 aa)) is the Protein kinase domain. Residues 10–18 (IGEGTYGVV) and lysine 32 contribute to the ATP site. Threonine 14 is modified (phosphothreonine). Residue tyrosine 15 is modified to Phosphotyrosine. The active-site Proton acceptor is aspartate 125. Threonine 158 is modified (phosphothreonine).

This sequence belongs to the protein kinase superfamily. CMGC Ser/Thr protein kinase family. CDC2/CDKX subfamily. May form a complex composed of at least the catalytic subunit CRK2 and a cyclin. The cofactor is Mg(2+). Autophosphorylates in presence of cyclin cyc-1 but not in presence of cyclin cyc-3.

It localises to the cytoplasm. It carries out the reaction L-seryl-[protein] + ATP = O-phospho-L-seryl-[protein] + ADP + H(+). It catalyses the reaction L-threonyl-[protein] + ATP = O-phospho-L-threonyl-[protein] + ADP + H(+). The enzyme catalyses [DNA-directed RNA polymerase] + ATP = phospho-[DNA-directed RNA polymerase] + ADP + H(+). Phosphorylation at Thr-14 or Tyr-15 inactivates the enzyme, while phosphorylation at Thr-158 activates it. Activated by cyclin cyc-1 in vitro. Activated by cyclin cyc-3 in vitro. Functionally, serine/threonine-protein kinase. Involved in the control of the cell cycle. Required for entry into S-phase and mitosis. Probable component of the kinase complex that phosphorylates the repetitive C-terminus of RNA polymerase II. In schizonts, phosphorylates ORC1 resulting in its dissociation from DNA, relocalization to the cytoplasm and likely its degradation. This Plasmodium falciparum (isolate 3D7) protein is Cyclin-dependent kinase 2 homolog.